Reading from the N-terminus, the 521-residue chain is Citrinin biosynthesis cluster MFS transporter ctnC (521 aa).

The tract at residues 1–29 (MKEEIDAPVSTDASGTDLENARDQPSGEK) is disordered. 8 helical membrane passes run 58-78 (SLIT…SSVF), 95-115 (VMTL…LVWG), 124-144 (LKPL…VAVA), 155-175 (FFLG…LADF), 182-202 (AIAI…GPIM), 237-257 (WTAW…FLTL), 313-333 (ILVC…LFFV), and 349-369 (GIAA…CLLV). Asn383 is a glycosylation site (N-linked (GlcNAc...) asparagine). 4 helical membrane-spanning segments follow: residues 392–412 (LPPM…FGWT), 417–437 (ISWA…LMIW), 465–485 (AVSA…GVDW), and 489–509 (LLGF…FYGA).

The protein belongs to the major facilitator superfamily. CAR1 family.

The protein resides in the membrane. Its function is as follows. MFS transporter; part of the gene cluster that mediates the biosynthesis the mycotoxin citrinin, a hepato-nephrotoxic compound to humans due to inhibition of respiration complex III. The chain is Citrinin biosynthesis cluster MFS transporter ctnC (ctnC) from Monascus purpureus (Red mold).